Here is a 375-residue protein sequence, read N- to C-terminus: Patatin-1-Kuras 2 (375 aa).

The signal sequence occupies residues 1–11 (MILATTSSTFA). Residues 20–218 (LSIDGGGIKG…TVADPALLSV (199 aa)) form the PNPLA domain. Residues 24 to 29 (GGGIKG) carry the GXGXXG motif. The short motif at 63–67 (GTSTG) is the GXSXG element. The active-site Nucleophile is the Ser-65. The N-linked (GlcNAc...) asparagine glycan is linked to Asn-103. The Proton acceptor role is filled by Asp-204. Positions 204–206 (DGA) match the DGA/G motif. The stretch at 349 to 373 (ETYEEALKRFAKLLSDRKKLRANKA) forms a coiled coil.

This sequence belongs to the patatin family. Tuber.

Its subcellular location is the vacuole. Functionally, probable lipolytic acyl hydrolase (LAH), an activity which is thought to be involved in the response of tubers to pathogens. This Solanum tuberosum (Potato) protein is Patatin-1-Kuras 2 (pat1-k2).